A 336-amino-acid chain; its full sequence is tRNA-cytidine(32) 2-sulfurtransferase (336 aa).

The interval 1-34 (MNAPEILNGAATASPADATEATQTAARAKTPLTR) is disordered. Residues 10-22 (AATASPADATEAT) show a composition bias toward low complexity. Residues 75–80 (SGGKDS) carry the PP-loop motif motif. [4Fe-4S] cluster is bound by residues Cys-150, Cys-153, and Cys-241.

It belongs to the TtcA family. Homodimer. It depends on Mg(2+) as a cofactor. The cofactor is [4Fe-4S] cluster.

The protein resides in the cytoplasm. The catalysed reaction is cytidine(32) in tRNA + S-sulfanyl-L-cysteinyl-[cysteine desulfurase] + AH2 + ATP = 2-thiocytidine(32) in tRNA + L-cysteinyl-[cysteine desulfurase] + A + AMP + diphosphate + H(+). It functions in the pathway tRNA modification. Its function is as follows. Catalyzes the ATP-dependent 2-thiolation of cytidine in position 32 of tRNA, to form 2-thiocytidine (s(2)C32). The sulfur atoms are provided by the cysteine/cysteine desulfurase (IscS) system. In Paraburkholderia phytofirmans (strain DSM 17436 / LMG 22146 / PsJN) (Burkholderia phytofirmans), this protein is tRNA-cytidine(32) 2-sulfurtransferase.